The primary structure comprises 116 residues: Large ribosomal subunit protein bL19 (116 aa).

This sequence belongs to the bacterial ribosomal protein bL19 family.

Its function is as follows. This protein is located at the 30S-50S ribosomal subunit interface and may play a role in the structure and function of the aminoacyl-tRNA binding site. This chain is Large ribosomal subunit protein bL19, found in Flavobacterium johnsoniae (strain ATCC 17061 / DSM 2064 / JCM 8514 / BCRC 14874 / CCUG 350202 / NBRC 14942 / NCIMB 11054 / UW101) (Cytophaga johnsonae).